The chain runs to 71 residues: Dermonecrotic toxin LgSicTox-alphaI-Loxn-A (71 aa).

Histidine 12 is an active-site residue. Mg(2+) contacts are provided by glutamate 32, aspartate 34, and aspartate 48.

Requires Mg(2+) as cofactor. Contains 2 disulfide bonds. As to expression, expressed by the venom gland.

The protein localises to the secreted. The catalysed reaction is an N-(acyl)-sphingosylphosphocholine = an N-(acyl)-sphingosyl-1,3-cyclic phosphate + choline. The enzyme catalyses an N-(acyl)-sphingosylphosphoethanolamine = an N-(acyl)-sphingosyl-1,3-cyclic phosphate + ethanolamine. It catalyses the reaction a 1-acyl-sn-glycero-3-phosphocholine = a 1-acyl-sn-glycero-2,3-cyclic phosphate + choline. It carries out the reaction a 1-acyl-sn-glycero-3-phosphoethanolamine = a 1-acyl-sn-glycero-2,3-cyclic phosphate + ethanolamine. In terms of biological role, catalyzes the hydrolysis of sphingomyelin. May also act on other phosphatidyl esters. Functionally, dermonecrotic toxins cleave the phosphodiester linkage between the phosphate and headgroup of certain phospholipids (sphingolipid and lysolipid substrates), forming an alcohol (often choline) and a cyclic phosphate. This toxin acts on sphingomyelin (SM). It may also act on ceramide phosphoethanolamine (CPE), lysophosphatidylcholine (LPC) and lysophosphatidylethanolamine (LPE), but not on lysophosphatidylserine (LPS), and lysophosphatidylglycerol (LPG). It acts by transphosphatidylation, releasing exclusively cyclic phosphate products as second products. In vivo, induces dermonecrosis, but is not lethal. Induces hemolysis, vascular permeability, edema, inflammatory response, and platelet aggregation. This is Dermonecrotic toxin LgSicTox-alphaI-Loxn-A from Loxosceles gaucho (Spider).